A 318-amino-acid polypeptide reads, in one-letter code: MPNIVLFSGSSHQDLSQRVADRLGLELGKVVTKKFSNQETSVEIGESVRGEDVYIIQSGCGEINDNLMELLIMINACKIASSSRVTAVIPCFPYARQDKKDKSRAPISAKLVANMLSVAGADHIITMDLHASQIQGFFDIPVDNLYAEPAVLQWIRENIAEWKNCIIVSPDAGGAKRVTSIADRLNVEFALIHKERKKANEVDRMVLVGDVKDRVAILVDDMADTCGTICHAADKLLSAGATKVYAILTHGIFSGPAISRINNAAFEAVVVTNTIPQEDKMKHCTKIQVIDISMILAEAIRRTHNGESVSYLFSHVPL.

96–101 (RQDKKD) contributes to the ATP binding site. The Mg(2+) site is built by aspartate 128, histidine 130, aspartate 139, and aspartate 143. Histidine 130 lines the ATP pocket. Positions 212–227 (KDRVAILVDDMADTCG) are binding of phosphoribosylpyrophosphate.

This sequence belongs to the ribose-phosphate pyrophosphokinase family. As to quaternary structure, homodimer. The active form is probably a hexamer composed of 3 homodimers. The cofactor is Mg(2+).

The catalysed reaction is D-ribose 5-phosphate + ATP = 5-phospho-alpha-D-ribose 1-diphosphate + AMP + H(+). Its pathway is metabolic intermediate biosynthesis; 5-phospho-alpha-D-ribose 1-diphosphate biosynthesis; 5-phospho-alpha-D-ribose 1-diphosphate from D-ribose 5-phosphate (route I): step 1/1. Its activity is regulated as follows. Activated by magnesium and inorganic phosphate. Competitively or non-competitively inhibited by ADP, 2,3-bisphosphoglyceride or GDP. In terms of biological role, catalyzes the synthesis of phosphoribosylpyrophosphate (PRPP) that is essential for nucleotide synthesis. The protein is Ribose-phosphate pyrophosphokinase 2 (PRPS2) of Homo sapiens (Human).